The primary structure comprises 1400 residues: DNA-directed RNA polymerase subunit beta' (1400 aa).

Residues C70, C72, C85, and C88 each contribute to the Zn(2+) site. Mg(2+)-binding residues include D460, D462, and D464. Zn(2+) contacts are provided by C814, C888, C895, and C898. The segment at 1367–1400 is disordered; sequence DRQAKRAEAQEGPSAEQATDNLAALLNAGFSSDE.

The protein belongs to the RNA polymerase beta' chain family. In terms of assembly, the RNAP catalytic core consists of 2 alpha, 1 beta, 1 beta' and 1 omega subunit. When a sigma factor is associated with the core the holoenzyme is formed, which can initiate transcription. Requires Mg(2+) as cofactor. It depends on Zn(2+) as a cofactor.

The catalysed reaction is RNA(n) + a ribonucleoside 5'-triphosphate = RNA(n+1) + diphosphate. Its function is as follows. DNA-dependent RNA polymerase catalyzes the transcription of DNA into RNA using the four ribonucleoside triphosphates as substrates. The chain is DNA-directed RNA polymerase subunit beta' from Vibrio campbellii (strain ATCC BAA-1116).